We begin with the raw amino-acid sequence, 142 residues long: Probable transport accessory protein MmpS5 (142 aa).

A helical membrane pass occupies residues 7 to 26 (RAWIPLLILVVVAIAGFTVQ).

Belongs to the MmpS family.

The protein resides in the cell membrane. The protein is Probable transport accessory protein MmpS5 (mmpS5) of Mycobacterium bovis (strain ATCC BAA-935 / AF2122/97).